The following is a 387-amino-acid chain: Cobalt-precorrin-5B C(1)-methyltransferase (387 aa).

This sequence belongs to the CbiD family.

It catalyses the reaction Co-precorrin-5B + S-adenosyl-L-methionine = Co-precorrin-6A + S-adenosyl-L-homocysteine. Its pathway is cofactor biosynthesis; adenosylcobalamin biosynthesis; cob(II)yrinate a,c-diamide from sirohydrochlorin (anaerobic route): step 6/10. Its function is as follows. Catalyzes the methylation of C-1 in cobalt-precorrin-5B to form cobalt-precorrin-6A. The polypeptide is Cobalt-precorrin-5B C(1)-methyltransferase (Desulfitobacterium hafniense (strain Y51)).